The primary structure comprises 341 residues: Glycerol-3-phosphate dehydrogenase [NAD(P)+] (341 aa).

S15, W16, R36, and K110 together coordinate NADPH. Sn-glycerol 3-phosphate is bound by residues K110, G139, and S141. A143 serves as a coordination point for NADPH. Residues K194, D247, S257, R258, and N259 each contribute to the sn-glycerol 3-phosphate site. Residue K194 is the Proton acceptor of the active site. R258 lines the NADPH pocket. Positions 282 and 284 each coordinate NADPH.

The protein belongs to the NAD-dependent glycerol-3-phosphate dehydrogenase family.

It localises to the cytoplasm. It carries out the reaction sn-glycerol 3-phosphate + NAD(+) = dihydroxyacetone phosphate + NADH + H(+). The catalysed reaction is sn-glycerol 3-phosphate + NADP(+) = dihydroxyacetone phosphate + NADPH + H(+). It functions in the pathway membrane lipid metabolism; glycerophospholipid metabolism. In terms of biological role, catalyzes the reduction of the glycolytic intermediate dihydroxyacetone phosphate (DHAP) to sn-glycerol 3-phosphate (G3P), the key precursor for phospholipid synthesis. The polypeptide is Glycerol-3-phosphate dehydrogenase [NAD(P)+] (Xanthomonas campestris pv. campestris (strain 8004)).